A 118-amino-acid polypeptide reads, in one-letter code: Transcription factor PAR2 (118 aa).

The segment at 1–59 (MEKTLATSHTKRSSPPSPSSAVNTSSTGFNRRTRQRLSDATASVSETDVEDEDEDEEGV) is disordered. Residues 19-30 (SSAVNTSSTGFN) are compositionally biased toward polar residues. The bHLH domain occupies 43 to 92 (SVSETDVEDEDEDEEGVEEKIEALQTIVPGGTELGVDALFEETASYILAL). Over residues 47–59 (TDVEDEDEDEEGV) the composition is skewed to acidic residues.

This sequence belongs to the bHLH protein family. In terms of assembly, homodimer.

It localises to the nucleus. In terms of biological role, atypical bHLH transcription factor that acts as a negative regulator of a variety of shade avoidance syndrome (SAS) responses, including seedling elongation and photosynthetic pigment accumulation. Acts as a direct transcriptional repressor of two auxin-responsive genes, SAUR15 and SAUR68. May function in integrating shade and hormone transcriptional networks in response to light and auxin changes. This is Transcription factor PAR2 (PAR2) from Arabidopsis thaliana (Mouse-ear cress).